A 101-amino-acid polypeptide reads, in one-letter code: Small ribosomal subunit protein uS14 (101 aa).

This sequence belongs to the universal ribosomal protein uS14 family. Part of the 30S ribosomal subunit. Contacts proteins S3 and S10.

Binds 16S rRNA, required for the assembly of 30S particles and may also be responsible for determining the conformation of the 16S rRNA at the A site. The protein is Small ribosomal subunit protein uS14 of Neisseria meningitidis serogroup C / serotype 2a (strain ATCC 700532 / DSM 15464 / FAM18).